A 200-amino-acid polypeptide reads, in one-letter code: Recombination protein RecR (200 aa).

A C4-type zinc finger spans residues 57-72 (CDSCQNFSDTEICQIC). Residues 80–175 (GTLCVVESPS…LITRLAHGIP (96 aa)) form the Toprim domain.

The protein belongs to the RecR family.

In terms of biological role, may play a role in DNA repair. It seems to be involved in an RecBC-independent recombinational process of DNA repair. It may act with RecF and RecO. The polypeptide is Recombination protein RecR (Marinobacter nauticus (strain ATCC 700491 / DSM 11845 / VT8) (Marinobacter aquaeolei)).